The following is a 362-amino-acid chain: Replication-associated protein (362 aa).

Positions 8-116 constitute a CRESS-DNA virus Rep endonuclease domain; that stretch reads RINAKNYFLT…DGDTLEWGEF (109 aa). The RCR-1 motif lies at 15–18; the sequence is FLTY. Positions 49, 57, and 59 each coordinate a divalent metal cation. Positions 57–59 match the RCR-2 motif; that stretch reads HLH. The active-site For DNA cleavage activity is Tyr103. The RCR-3 signature appears at 103 to 106; the sequence is YLEK. Position 107 (Asp107) interacts with a divalent metal cation. A binding to RBR1 region spans residues 143–153; sequence KSEALNVLREL. The segment at 156–176 is oligomerization; that stretch reads KDYVLQFHNLNSNLDRIFTPP. Residue 221–228 participates in ATP binding; that stretch reads GESRTGKT. A disordered region spans residues 341–362; the sequence is YSGTYQGPTQNSEEEVHPEEEN. Positions 352–362 are enriched in acidic residues; it reads SEEEVHPEEEN.

It belongs to the geminiviridae Rep protein family. Homooligomer. Interacts with the replication enhancer protein (REn). Interacts with host retinoblastoma-related protein 1 (RBR1), and may thereby induce the transcription of host replicative enzymes even if the cell is not dividing anymore. Interacts with host PCNA. Interacts with host SCE1 protein. Binds to host RAD54 protein to ensure geminiviral replication. Mg(2+) is required as a cofactor. Mn(2+) serves as cofactor.

Its subcellular location is the host nucleus. Its function is as follows. Essential for the replication of viral ssDNA. The closed circular ssDNA genome is first converted to a superhelical dsDNA. Rep binds a specific region at the genome origin of replication. It introduces an endonucleolytic nick within the conserved sequence 5'-TAATATTAC-3' in the intergenic region of the genome present in all geminiviruses, thereby initiating the rolling circle replication (RCR). Following cleavage, binds covalently to the 5'-phosphate of DNA as a tyrosyl ester. The cleavage gives rise to a free 3'-OH that serves as a primer for the cellular DNA polymerase. The polymerase synthesizes the (+) strand DNA by rolling circle mechanism. After one round of replication, a Rep-catalyzed nucleotidyl transfer reaction releases a circular single-stranded virus genome, thereby terminating the replication. Displays origin-specific DNA cleavage, nucleotidyl transferase, ATPase and helicase activities. The sequence is that of Replication-associated protein from Cynanchum acutum (Little mallow).